The chain runs to 91 residues: uncharacterized protein (91 aa).

The Integrase catalytic domain occupies Met-1–Ile-91.

This is an uncharacterized protein from Haemophilus influenzae (strain ATCC 51907 / DSM 11121 / KW20 / Rd).